Here is a 187-residue protein sequence, read N- to C-terminus: Adenine phosphoribosyltransferase 1 (187 aa).

Ser68 is modified (phosphoserine). 133 to 137 serves as a coordination point for AMP; that stretch reads ATGGS.

The protein belongs to the purine/pyrimidine phosphoribosyltransferase family. Homodimer. The cofactor is Mg(2+).

It is found in the cytoplasm. The protein resides in the nucleus. It carries out the reaction AMP + diphosphate = 5-phospho-alpha-D-ribose 1-diphosphate + adenine. It participates in purine metabolism; AMP biosynthesis via salvage pathway; AMP from adenine: step 1/1. Catalyzes a salvage reaction resulting in the formation of AMP, that is energically less costly than de novo synthesis. In Saccharomyces cerevisiae (strain ATCC 204508 / S288c) (Baker's yeast), this protein is Adenine phosphoribosyltransferase 1.